The sequence spans 184 residues: dITP/XTP pyrophosphatase (184 aa).

7–12 (TSNPGK) contacts substrate. Positions 36 and 65 each coordinate Mg(2+). Aspartate 65 acts as the Proton acceptor in catalysis. Residues serine 66, 139–142 (FGFD), lysine 162, and 167–168 (HR) contribute to the substrate site.

The protein belongs to the HAM1 NTPase family. As to quaternary structure, homodimer. Requires Mg(2+) as cofactor.

The catalysed reaction is XTP + H2O = XMP + diphosphate + H(+). The enzyme catalyses dITP + H2O = dIMP + diphosphate + H(+). It catalyses the reaction ITP + H2O = IMP + diphosphate + H(+). In terms of biological role, pyrophosphatase that catalyzes the hydrolysis of nucleoside triphosphates to their monophosphate derivatives, with a high preference for the non-canonical purine nucleotides XTP (xanthosine triphosphate), dITP (deoxyinosine triphosphate) and ITP. Seems to function as a house-cleaning enzyme that removes non-canonical purine nucleotides from the nucleotide pool, thus preventing their incorporation into DNA/RNA and avoiding chromosomal lesions. This is dITP/XTP pyrophosphatase from Thermococcus kodakarensis (strain ATCC BAA-918 / JCM 12380 / KOD1) (Pyrococcus kodakaraensis (strain KOD1)).